A 102-amino-acid chain; its full sequence is Carboxysome shell protein CcmK2 (102 aa).

The region spanning alanine 4 to proline 90 is the BMC domain.

Belongs to the bacterial microcompartments protein family. CcmK subfamily. In terms of assembly, homohexamer. Stacked hexamers, with the concave faces together, have also been crystallized. Interacts preferentially with itself, then with CcmK1 and CcmK4a in vitro. May interact with CcmL, this occurs at very high CcmK2 concentrations. Interacts with CcmN and CcmO in the carboxysome.

The protein localises to the carboxysome. Its function is as follows. Probably the major shell protein of the carboxysome, a polyhedral inclusion where RuBisCO (ribulose bisphosphate carboxylase, rbcL-rbcS) is sequestered. Assembles into hexamers which make sheets that form the facets of the polyhedral carboxysome. The hexamer central pore probably regulates metabolite flux. This chain is Carboxysome shell protein CcmK2, found in Thermosynechococcus vestitus (strain NIES-2133 / IAM M-273 / BP-1).